A 258-amino-acid polypeptide reads, in one-letter code: Acetylglutamate kinase (258 aa).

Residues 44-45 (GG), Arg66, and Asn158 each bind substrate. ATP contacts are provided by residues 181–186 (DVSGIL) and 209–211 (IIT).

This sequence belongs to the acetylglutamate kinase family. ArgB subfamily. Homodimer.

Its subcellular location is the cytoplasm. It catalyses the reaction N-acetyl-L-glutamate + ATP = N-acetyl-L-glutamyl 5-phosphate + ADP. The protein operates within amino-acid biosynthesis; L-arginine biosynthesis; N(2)-acetyl-L-ornithine from L-glutamate: step 2/4. Its function is as follows. Catalyzes the ATP-dependent phosphorylation of N-acetyl-L-glutamate. The polypeptide is Acetylglutamate kinase (Escherichia coli O157:H7).